The following is an 870-amino-acid chain: Alanine--tRNA ligase (870 aa).

His585, His589, Cys689, and His693 together coordinate Zn(2+).

Belongs to the class-II aminoacyl-tRNA synthetase family. Requires Zn(2+) as cofactor.

Its subcellular location is the cytoplasm. The enzyme catalyses tRNA(Ala) + L-alanine + ATP = L-alanyl-tRNA(Ala) + AMP + diphosphate. In terms of biological role, catalyzes the attachment of alanine to tRNA(Ala) in a two-step reaction: alanine is first activated by ATP to form Ala-AMP and then transferred to the acceptor end of tRNA(Ala). Also edits incorrectly charged Ser-tRNA(Ala) and Gly-tRNA(Ala) via its editing domain. The chain is Alanine--tRNA ligase from Picrophilus torridus (strain ATCC 700027 / DSM 9790 / JCM 10055 / NBRC 100828 / KAW 2/3).